The sequence spans 207 residues: Dephospho-CoA kinase (207 aa).

The region spanning 5–203 (AVGLTGGIAC…ARYRALASVF (199 aa)) is the DPCK domain. 13 to 18 (ACGKSL) serves as a coordination point for ATP.

Belongs to the CoaE family.

It localises to the cytoplasm. The enzyme catalyses 3'-dephospho-CoA + ATP = ADP + CoA + H(+). It functions in the pathway cofactor biosynthesis; coenzyme A biosynthesis; CoA from (R)-pantothenate: step 5/5. In terms of biological role, catalyzes the phosphorylation of the 3'-hydroxyl group of dephosphocoenzyme A to form coenzyme A. This is Dephospho-CoA kinase from Xylella fastidiosa (strain 9a5c).